Reading from the N-terminus, the 361-residue chain is MSHKERPTFYRQELNKTIWEVPERYQNLSPVGSGAYGSVCSALDTKSGLRVAVKKLSRPFQSMIHAKRTYRELRLLKHMKHENVIGLLDAFSPATCLAGFNDVYLVTHLMGADLNNIVKCQKLTDDHVQFLIYQILRGLKYIHSADIIHRDLKPSNLAVNEDCELKILDFGLARLTDDEMTGYVATRWYRAPEIMLNWMHYNMTVDIWSVGCIMAELLTGRTLFPGTDHINQLQQIMRLTGTPPASLISRMPSHEARNYINSLSYMPKRNFADVFVGANPMAVDLLEKMLVLDTDKRITASQALAHPYFAQYHDPDDEPEADPYDQSFESRDLDIEEWKRLTYEEVISFEPPVFDGDEMES.

One can recognise a Protein kinase domain in the interval 25 to 309; it reads YQNLSPVGSG…ASQALAHPYF (285 aa). ATP contacts are provided by residues 31 to 39 and Lys-54; that span reads VGSGAYGSV. Residue Asp-151 is the Proton acceptor of the active site. Position 181 is a phosphothreonine; by MAP2K6 (Thr-181). Residues 181 to 183 carry the TXY motif; sequence TGY. Tyr-183 bears the Phosphotyrosine; by MAP2K6 mark.

It belongs to the protein kinase superfamily. CMGC Ser/Thr protein kinase family. MAP kinase subfamily. Requires Mg(2+) as cofactor. In terms of processing, dually phosphorylated on Thr-181 and Tyr-183, which activates the enzyme. As to expression, predominantly expressed in the ovary. Lower levels present in brain, gill, heart, spleen, kidney, muscle and gut.

It is found in the cytoplasm. Its subcellular location is the nucleus. It carries out the reaction L-seryl-[protein] + ATP = O-phospho-L-seryl-[protein] + ADP + H(+). The enzyme catalyses L-threonyl-[protein] + ATP = O-phospho-L-threonyl-[protein] + ADP + H(+). With respect to regulation, activated by threonine and tyrosine phosphorylation by the dual specificity kinase, MKK6. Serine/threonine kinase which acts as an essential component of the MAP kinase signal transduction pathway. Mapk14b is one of the four p38 MAPKs which play an important role in the cascades of cellular responses evoked by extracellular stimuli such as pro-inflammatory cytokines or physical stress leading to direct activation of transcription factors. Accordingly, p38 MAPKs phosphorylate a broad range of proteins and it has been estimated that they may have approximately 200 to 300 substrates each. Some of the targets are downstream kinases which are activated through phosphorylation and further phosphorylate additional targets. In Cyprinus carpio (Common carp), this protein is Mitogen-activated protein kinase 14B (mapk14b).